The following is a 107-amino-acid chain: Early E3A 12.5 kDa protein (107 aa).

The protein belongs to the adenoviridae E3A-2 family.

Functionally, not yet known. In Human adenovirus C serotype 5 (HAdV-5), this protein is Early E3A 12.5 kDa protein.